Reading from the N-terminus, the 237-residue chain is Phosphoribosylaminoimidazole-succinocarboxamide synthase (237 aa).

Belongs to the SAICAR synthetase family.

The catalysed reaction is 5-amino-1-(5-phospho-D-ribosyl)imidazole-4-carboxylate + L-aspartate + ATP = (2S)-2-[5-amino-1-(5-phospho-beta-D-ribosyl)imidazole-4-carboxamido]succinate + ADP + phosphate + 2 H(+). The protein operates within purine metabolism; IMP biosynthesis via de novo pathway; 5-amino-1-(5-phospho-D-ribosyl)imidazole-4-carboxamide from 5-amino-1-(5-phospho-D-ribosyl)imidazole-4-carboxylate: step 1/2. The polypeptide is Phosphoribosylaminoimidazole-succinocarboxamide synthase (Yersinia enterocolitica serotype O:8 / biotype 1B (strain NCTC 13174 / 8081)).